An 83-amino-acid chain; its full sequence is Small ribosomal subunit protein uS17 (83 aa).

This sequence belongs to the universal ribosomal protein uS17 family. Part of the 30S ribosomal subunit.

One of the primary rRNA binding proteins, it binds specifically to the 5'-end of 16S ribosomal RNA. The protein is Small ribosomal subunit protein uS17 of Aliarcobacter butzleri (strain RM4018) (Arcobacter butzleri).